The primary structure comprises 423 residues: Serpin B12 (423 aa).

Positions 63–72 (LSKDEHKEPN) are enriched in basic and acidic residues. The interval 63 to 106 (LSKDEHKEPNDPSPQSESKASDSSLEGQKQTSASQDQQGESTND) is disordered. Polar residues predominate over residues 75–106 (SPQSESKASDSSLEGQKQTSASQDQQGESTND).

Belongs to the serpin family. Ov-serpin subfamily. In terms of assembly, interacts with SLFN12; as part of a pathway regulating cell differentiation.

It localises to the cytoplasm. Its function is as follows. Inhibits trypsin and plasmin, but not thrombin, coagulation factor Xa, or urokinase-type plasminogen activator. May play a role in cell differentiation. In Mus musculus (Mouse), this protein is Serpin B12 (Serpinb12).